A 220-amino-acid polypeptide reads, in one-letter code: Ribosome maturation factor RimM (220 aa).

Residues 143–220 enclose the PRC barrel domain; the sequence is EGEFYWVDLI…RIVVDWGLDY (78 aa).

Belongs to the RimM family. In terms of assembly, binds ribosomal protein uS19.

It localises to the cytoplasm. Its function is as follows. An accessory protein needed during the final step in the assembly of 30S ribosomal subunit, possibly for assembly of the head region. Essential for efficient processing of 16S rRNA. May be needed both before and after RbfA during the maturation of 16S rRNA. It has affinity for free ribosomal 30S subunits but not for 70S ribosomes. This chain is Ribosome maturation factor RimM, found in Cupriavidus metallidurans (strain ATCC 43123 / DSM 2839 / NBRC 102507 / CH34) (Ralstonia metallidurans).